A 213-amino-acid chain; its full sequence is Maleamate amidohydrolase (213 aa).

Cysteine 154 acts as the Nucleophile in catalysis.

This sequence belongs to the isochorismatase family.

The catalysed reaction is maleamate + H2O = maleate + NH4(+). It participates in cofactor degradation; nicotinate degradation. Maleamate amidase that transforms maleamate into maleate and ammonia in the aerobic nicotinate degradation pathway. This is Maleamate amidohydrolase (nicF) from Pseudomonas putida (strain ATCC 47054 / DSM 6125 / CFBP 8728 / NCIMB 11950 / KT2440).